The chain runs to 364 residues: Endoglucanase A (364 aa).

E169 functions as the Proton donor in the catalytic mechanism. The Nucleophile role is filled by E293.

Belongs to the glycosyl hydrolase 5 (cellulase A) family.

Its subcellular location is the cytoplasm. The catalysed reaction is Endohydrolysis of (1-&gt;4)-beta-D-glucosidic linkages in cellulose, lichenin and cereal beta-D-glucans.. The enzyme catalyses Endohydrolysis of (1-&gt;4)-beta-D-xylosidic linkages in xylans.. In terms of biological role, hydrolyzes both carboxymethylcellulose and xylan. Probably has a role in hydrolyzing oligosaccharides derived from cellulose, which are transported across the cell wall. This Ruminococcus albus protein is Endoglucanase A (celA).